A 322-amino-acid chain; its full sequence is Serine/threonine-protein phosphatase PP1 isozyme 6 (322 aa).

The residue at position 1 (methionine 1) is an N-acetylmethionine. Residues aspartate 61, histidine 63, aspartate 89, and asparagine 121 each coordinate Mn(2+). Residue histidine 122 is the Proton donor of the active site. Positions 170 and 245 each coordinate Mn(2+). A disordered region spans residues 303–322; sequence GFNNNVPRPGTPPHKGGKGR.

This sequence belongs to the PPP phosphatase family. PP-1 subfamily. It depends on Mn(2+) as a cofactor. In terms of tissue distribution, strongly up-regulated within developing flowers, especially in the tapetum, the developing and mature pollen and in the ovaries.

It is found in the nucleus. The protein resides in the cytoplasm. It catalyses the reaction O-phospho-L-seryl-[protein] + H2O = L-seryl-[protein] + phosphate. The enzyme catalyses O-phospho-L-threonyl-[protein] + H2O = L-threonyl-[protein] + phosphate. Phosphatase activity is strongly reduced by the protein phosphatase inhibitor 2 (I-2). In terms of biological role, serine/threonine-protein phosphatase that possesses phosphatase activity toward para-nitrophenyl phosphate (pNPP) in vitro. This chain is Serine/threonine-protein phosphatase PP1 isozyme 6, found in Arabidopsis thaliana (Mouse-ear cress).